The following is a 206-amino-acid chain: 2-phospho-L-lactate guanylyltransferase (206 aa).

The protein belongs to the CofC family. Homodimer.

The catalysed reaction is (2S)-2-phospholactate + GTP + H(+) = (2S)-lactyl-2-diphospho-5'-guanosine + diphosphate. The protein operates within cofactor biosynthesis; coenzyme F420 biosynthesis. In terms of biological role, guanylyltransferase that catalyzes the activation of (2S)-2-phospholactate (2-PL) as (2S)-lactyl-2-diphospho-5'-guanosine, via the condensation of 2-PL with GTP. It is involved in the biosynthesis of coenzyme F420, a hydride carrier cofactor. The protein is 2-phospho-L-lactate guanylyltransferase of Archaeoglobus profundus (strain DSM 5631 / JCM 9629 / NBRC 100127 / Av18).